The chain runs to 557 residues: Ras-specific guanine nucleotide-releasing factor RalGPS2 (557 aa).

Residues 49–287 (TPEEYAGQIT…YKLSLKIEPG (239 aa)) form the Ras-GEF domain. The disordered stretch occupies residues 283-314 (KIEPGTSTPRSAASREDLVGPEVGASPQSGRK). Phosphoserine is present on residues Ser-293, Ser-296, Ser-308, and Ser-311. A Phosphothreonine modification is found at Thr-326. The PXXP signature appears at 327-330 (PPSP). Phosphoserine is present on residues Ser-329 and Ser-343. At Thr-361 the chain carries Phosphothreonine. The tract at residues 368–409 (RHLLDDSVMEPHAPSRGQAESSTLSSGISIGSSDGSELSEET) is disordered. Ser-374 is subject to Phosphoserine. Low complexity predominate over residues 387-403 (ESSTLSSGISIGSSDGS). The region spanning 431 to 543 (AVTIQGVLRR…WFKHLSAACQ (113 aa)) is the PH domain. The required for stimulation of nucleotide exchange by RALA stretch occupies residues 433 to 557 (TIQGVLRRKT…QVPTNLMTFE (125 aa)).

In terms of assembly, interacts with the SH3 domains of GRB2 and PLCG1. Interacts with RALA.

Its subcellular location is the cytoplasm. The protein resides in the cell membrane. Its function is as follows. Guanine nucleotide exchange factor for the small GTPase RALA. May be involved in cytoskeletal organization. May also be involved in the stimulation of transcription in a Ras-independent fashion. This Macaca fascicularis (Crab-eating macaque) protein is Ras-specific guanine nucleotide-releasing factor RalGPS2 (RALGPS2).